The chain runs to 132 residues: uncharacterized protein (132 aa).

A disordered region spans residues 1–34; that stretch reads MTAGAGGSPPTRRCPATEDRAPATVATPSSADPT.

To M.tuberculosis Rv2656c.

This is an uncharacterized protein from Mycobacterium tuberculosis (strain CDC 1551 / Oshkosh).